The primary structure comprises 1393 residues: Protein strawberry notch homolog 1 (1393 aa).

The tract at residues 129–148 is disordered; it reads STRPSVSAPTVRNAMTSAPS. A Phosphoserine modification is found at S148. K149 carries the post-translational modification N6-acetyllysine. A phosphoserine mark is found at S162 and S214. Position 413 is an N6-acetyllysine (K413). Positions 687-840 are disordered; that stretch reads APSNNSSPRD…ANSNTNSNSS (154 aa). S692, S693, and S697 each carry phosphoserine. Residues 697 to 716 are compositionally biased toward basic and acidic residues; that stretch reads SPCKENKIKKRKGEEITREA. Acidic residues predominate over residues 733-747; it reads SGSESDASDNEESDY. S754, S755, and S768 each carry phosphoserine. Residues 756–775 are compositionally biased toward acidic residues; it reads GDDDDFNPFLDESNEDDEND. Over residues 781 to 793 the composition is skewed to basic residues; sequence KDHKKNKEKKKKK. S794 and S815 each carry phosphoserine. Residues 824 to 840 are compositionally biased toward low complexity; that stretch reads PAPNSTPANSNTNSNSS. The stretch at 843–870 forms a coiled coil; sequence TSQDAVERAQQMKKDLLDKLEKLAEDLP. At K1222 the chain carries N6-acetyllysine. S1386 is subject to Phosphoserine.

Belongs to the SBNO family.

The protein resides in the nucleus. Plays a crucial role in the regulation of neural stem cells (NSCs) proliferation. Enhances the phosphorylation of GSK3B through the PI3K-Akt signaling pathway, thereby upregulating the Wnt/beta-catenin signaling pathway and promoting the proliferation of NSCs. Improves ischemic stroke recovery while inhibiting neuroinflammation through small extracellular vesicles (sEVs)-mediated mechanism. Enhances the secretion of sEVs from NSCs, which in turn inhibit both the MAPK and NF-kappaB pathways in microglia. This inhibition suppresses the pro-inflammatory M1 polarization of microglia, promoting a shift towards the M2 anti-inflammatory phenotype, which is beneficial for reducing neuroinflammation. The protein is Protein strawberry notch homolog 1 (SBNO1) of Homo sapiens (Human).